The primary structure comprises 275 residues: WIMGHMVNAIEQVDEFLDLGANAIEFDVDFDDDGVAKYTHHGIPCDCGRLCTKYAVFTEYLDYVRQVTTPGDPKFRKELVLLALDLKLQRISSEKAYAAGVDVATKLLDHYWMRGWNGGRAYILLNIPLVEDYEFIRAFKDTLRKEGHEQYNAKVGINFTGNEDLDEIREVLEKLGEDEHIWQADGITSCFPRGTERLKKALEKRDTPGYKYIPKVYAWTLVRSSIMRRSLRLGVDGVMSNYPDSVVKVLKEKEFSDKFRLATYADNPWEKFTPI.

Residue His5 is part of the active site. Positions 25 and 27 each coordinate Mg(2+). His41 acts as the Nucleophile in catalysis. 2 cysteine pairs are disulfide-bonded: Cys45–Cys51 and Cys47–Cys190. Residue Asp85 coordinates Mg(2+).

The protein belongs to the arthropod phospholipase D family. Class II subfamily. The cofactor is Mg(2+). Expressed by the venom gland.

It localises to the secreted. The enzyme catalyses an N-(acyl)-sphingosylphosphocholine = an N-(acyl)-sphingosyl-1,3-cyclic phosphate + choline. It catalyses the reaction an N-(acyl)-sphingosylphosphoethanolamine = an N-(acyl)-sphingosyl-1,3-cyclic phosphate + ethanolamine. It carries out the reaction a 1-acyl-sn-glycero-3-phosphocholine = a 1-acyl-sn-glycero-2,3-cyclic phosphate + choline. The catalysed reaction is a 1-acyl-sn-glycero-3-phosphoethanolamine = a 1-acyl-sn-glycero-2,3-cyclic phosphate + ethanolamine. Its function is as follows. Dermonecrotic toxins cleave the phosphodiester linkage between the phosphate and headgroup of certain phospholipids (sphingolipid and lysolipid substrates), forming an alcohol (often choline) and a cyclic phosphate. This toxin acts on sphingomyelin (SM). It may also act on ceramide phosphoethanolamine (CPE), lysophosphatidylcholine (LPC) and lysophosphatidylethanolamine (LPE), but not on lysophosphatidylserine (LPS), and lysophosphatidylglycerol (LPG). It acts by transphosphatidylation, releasing exclusively cyclic phosphate products as second products. Induces dermonecrosis, hemolysis, increased vascular permeability, edema, inflammatory response, and platelet aggregation. The polypeptide is Dermonecrotic toxin SpeSicTox-betaIIA3i (Sicarius peruensis (Six-eyed sand spider)).